The sequence spans 301 residues: Prestalk A differentiation protein A (301 aa).

This sequence belongs to the NmrA-type oxidoreductase family.

Its function is as follows. Involved in development and cell differentiation. The polypeptide is Prestalk A differentiation protein A (padA) (Dictyostelium discoideum (Social amoeba)).